A 708-amino-acid polypeptide reads, in one-letter code: Ion-translocating oxidoreductase complex subunit C (708 aa).

4Fe-4S ferredoxin-type domains follow at residues 369–397 (GEPQ…QQLY) and 407–436 (KATT…VQYF). The [4Fe-4S] cluster site is built by Cys377, Cys380, Cys383, Cys387, Cys416, Cys419, Cys422, and Cys426. The interval 630–682 (AKARKLEQQQANAEPEEQIDPRKAAVEAAIARAKARKLEQQQANAEPEEQIDP) is disordered.

Belongs to the 4Fe4S bacterial-type ferredoxin family. RnfC subfamily. The complex is composed of six subunits: RsxA, RsxB, RsxC, RsxD, RsxE and RsxG. [4Fe-4S] cluster is required as a cofactor.

It localises to the cell inner membrane. In terms of biological role, part of a membrane-bound complex that couples electron transfer with translocation of ions across the membrane. Required to maintain the reduced state of SoxR. This Escherichia coli (strain UTI89 / UPEC) protein is Ion-translocating oxidoreductase complex subunit C.